Consider the following 221-residue polypeptide: Adenylate kinase (221 aa).

Gly10–Thr15 lines the ATP pocket. The interval Ser30 to Val59 is NMP. AMP contacts are provided by residues Thr31, Arg36, Glu57–Val59, Gly85–Arg88, and Gln92. The tract at residues Gly122 to Asp159 is LID. ATP is bound by residues Arg123 and Thr132–Tyr133. AMP-binding residues include Arg156 and Arg167. Position 207 (Gly207) interacts with ATP.

It belongs to the adenylate kinase family. Monomer.

The protein resides in the cytoplasm. It carries out the reaction AMP + ATP = 2 ADP. Its pathway is purine metabolism; AMP biosynthesis via salvage pathway; AMP from ADP: step 1/1. In terms of biological role, catalyzes the reversible transfer of the terminal phosphate group between ATP and AMP. Plays an important role in cellular energy homeostasis and in adenine nucleotide metabolism. The protein is Adenylate kinase of Paraburkholderia phymatum (strain DSM 17167 / CIP 108236 / LMG 21445 / STM815) (Burkholderia phymatum).